Reading from the N-terminus, the 250-residue chain is Small ribosomal subunit protein uS3 (250 aa).

One can recognise a KH type-2 domain in the interval 39–111; the sequence is IRQLINNFSK…DINLNILEVK (73 aa).

The protein belongs to the universal ribosomal protein uS3 family. In terms of assembly, part of the 30S ribosomal subunit. Forms a tight complex with proteins S10 and S14.

Its function is as follows. Binds the lower part of the 30S subunit head. Binds mRNA in the 70S ribosome, positioning it for translation. This is Small ribosomal subunit protein uS3 from Phytoplasma australiense.